The following is a 310-amino-acid chain: MNGLSLSELCCLFCCPPCPGRIAAKLAFLPPEATYSLVPEPEPGPGGAGAAPLGTLRASSGAPGRWKLHLTERADFQYSQRELDTIEVFPTKSARGNRVSCMYVRCVPGARYTVLFSHGNAVDLGQMSSFYIGLGSRLHCNIFSYDYSGYGASSGRPSERNLYADIDAAWQALRTRYGISPDSIILYGQSIGTVPTVDLASRYECAAVVLHSPLTSGMRVAFPDTKKTYCFDAFPNIEKVSKITSPVLIIHGTEDEVIDFSHGLALYERCPKAVEPLWVEGAGHNDIELYSQYLERLRRFISQELPSQRA.

Active-site charge relay system residues include Ser-190, Asp-255, and His-284. Residue Ser-307 is modified to Phosphoserine.

Belongs to the AB hydrolase superfamily. ABHD17 family. Palmitoylated on cysteine residues located in a cysteine cluster at the N-terminus which promotes membrane localization. Palmitoylation is required for post-synaptic localization and for depalmitoylating activity towards DLG4/PSD95.

It localises to the cell membrane. The protein resides in the endosome membrane. Its subcellular location is the cell projection. The protein localises to the dendritic spine. It is found in the postsynaptic density membrane. The catalysed reaction is S-hexadecanoyl-L-cysteinyl-[protein] + H2O = L-cysteinyl-[protein] + hexadecanoate + H(+). With respect to regulation, inhibited by palmostatin-B. In terms of biological role, hydrolyzes fatty acids from S-acylated cysteine residues in proteins. Has depalmitoylating activity towards NRAS. Has depalmitoylating activity towards DLG4/PSD95. May have depalmitoylating activity towards MAP6. In Homo sapiens (Human), this protein is Alpha/beta hydrolase domain-containing protein 17A.